Consider the following 136-residue polypeptide: Sec-independent protein translocase protein TatB (136 aa).

The chain crosses the membrane as a helical span at residues Met1–Gly21. Residues Ala66–Glu136 form a disordered region. 2 stretches are compositionally biased toward basic and acidic residues: residues Glu77 to Ala89 and Tyr96 to Leu107. Positions Asp108 to Pro130 are enriched in polar residues.

This sequence belongs to the TatB family. As to quaternary structure, the Tat system comprises two distinct complexes: a TatABC complex, containing multiple copies of TatA, TatB and TatC subunits, and a separate TatA complex, containing only TatA subunits. Substrates initially bind to the TatABC complex, which probably triggers association of the separate TatA complex to form the active translocon.

It is found in the cell inner membrane. Part of the twin-arginine translocation (Tat) system that transports large folded proteins containing a characteristic twin-arginine motif in their signal peptide across membranes. Together with TatC, TatB is part of a receptor directly interacting with Tat signal peptides. TatB may form an oligomeric binding site that transiently accommodates folded Tat precursor proteins before their translocation. This is Sec-independent protein translocase protein TatB from Psychromonas ingrahamii (strain DSM 17664 / CCUG 51855 / 37).